The chain runs to 189 residues: Interferon alpha-6 (189 aa).

The signal sequence occupies residues 1 to 20; the sequence is MALPFALLMALVVLSCKSSC. Cystine bridges form between C24/C122 and C52/C162.

It belongs to the alpha/beta interferon family.

It is found in the secreted. Its function is as follows. Produced by macrophages, IFN-alpha have antiviral activities. Interferon stimulates the production of two enzymes: a protein kinase and an oligoadenylate synthetase. This chain is Interferon alpha-6 (IFNA6), found in Homo sapiens (Human).